A 188-amino-acid polypeptide reads, in one-letter code: MDCRKMVRFSYSVIWIMAISKAFELGLVAGLGHQEFARPSRGDLAFRDDSIWPQEEPAIRPRSSQRVLPMGIQHSKELNRTCCLNGGTCMLESFCACPPSFYGRNCEHDVRKENCGSVPHDTWLPKKCSLCKCWHGQLRCFPQAFLPGCDGLVMDEHLVASRTPELPPSARTTTFMLAGICLSIQSYY.

The region spanning 78 to 107 (LNRTCCLNGGTCMLESFCACPPSFYGRNCE) is the EGF-like domain. An N-linked (GlcNAc...) asparagine glycan is attached at asparagine 79. Intrachain disulfides connect cysteine 82-cysteine 89, cysteine 83-cysteine 95, cysteine 97-cysteine 106, cysteine 115-cysteine 133, cysteine 128-cysteine 149, and cysteine 131-cysteine 140.

The protein belongs to the EGF-CFC (Cripto-1/FRL1/Cryptic) family. As to expression, expressed weakly in lung, colon and breast. Expressed also strongly in primary cancer tissues; lung and colon cancers.

It localises to the cell membrane. In terms of biological role, could play a role in the determination of the epiblastic cells that subsequently give rise to the mesoderm. Activates the Nodal-dependent signaling pathway. This Homo sapiens (Human) protein is Protein CRIPTO3.